Reading from the N-terminus, the 719-residue chain is Anaphase-promoting complex subunit 4 (719 aa).

A WD repeat occupies 57–96 (NSQRIWDVDFHDLEATELCWNHDGNLIVVGFKNGELKIID).

As to quaternary structure, the APC/C is composed of at least 13 subunits: apc1, apc2, nuc2, apc4, apc5, cut9, apc8, apc10, apc11, hcn1, apc13, apc14 and apc15. Interacts with apc1 and dim1.

Its function is as follows. Component of the anaphase-promoting complex/cyclosome (APC/C), a cell cycle-regulated E3 ubiquitin-protein ligase complex that controls progression through mitosis and the G1 phase of the cell cycle. The APC/C is thought to confer substrate specificity and, in the presence of ubiquitin-conjugating E2 enzymes, it catalyzes the formation of protein-ubiquitin conjugates that are subsequently degraded by the 26S proteasome. Has a role in promoting metaphase to anaphase transition via the ubiquitination of specific mitotic substrates. In Schizosaccharomyces pombe (strain 972 / ATCC 24843) (Fission yeast), this protein is Anaphase-promoting complex subunit 4 (cut20).